Here is an 875-residue protein sequence, read N- to C-terminus: MSDSDKKPTLGRRPLGLKTAVEAGEVKQTFSHGRTNKVVVEVKRRKLMGRPGEAAPTAAPAAAATPAPTPVAPPPPPPPPPPPPSASRETRQEMQVRLLREAEEARLAALEAANRREQEERLRAIEEERRRAEEKARAEAEAAAAPAAPAAPAAPSAAPAAAQSAPEAAPAPVAEPEVARQPEAAPVAATAPAAPKAEEAKPAAPAVPAPRRFTPVAPAAPIKRPELAAKKPAHPQRDRKTEDRRGGKLTVTRALNEDEGARARSLAALKRAREKERRAHFAGQSQPREKQVRDVVVPDAITVQDLANRMAEKAADLVKALFKMGMMVTINQTIDQDTAELLVTEFGHNIQRVSESDADIDTSADVDPEESLKARPPVVTIMGHVDHGKTSLLDALRGTDVVRGEAGGITQHIGAYQIKTKGGDFITFLDTPGHEAFTEMRIRGANVTDIVILVVAGDDGLMPQTIEAINHTKAAGVPMIVAITKADKPEFQPQKIRERLLEHEIIVEAMSGDVQDVEVSAKTGAGLDELIEKILLQAELLELKANPDRSAEATVIEAKLDKGKGPLATVLVNRGTLKVGDILVVGTQSGRVRAMLDDKGRQVKAAGPSLPVEVLGIGGVPMAGDTLTVVESEARAREVAAYRQERATAKRTAQAPASLENMFSALAAKNAVIEYPLVIRADVQGSAEAIVNALNKISTDEIKVRILASGVGAITESDVNLAQASGAPIVGFNVRPNAKARELIERNKVRMKYFDVIYQLTDDIRSEMAGELGPEAIETVVGRAEVKEVFPAGKRDKAAGLLVVEGVIRKGLHARLTRNDVIVSRTTIASLRRFKDDVPEVRAGLECGVLLQDTNDIKAGDQLEVFEVEMRERTL.

Disordered stretches follow at residues 1–20, 47–102, and 126–246; these read MSDS…LKTA, LMGR…LREA, and EEER…DRRG. The span at 54-66 shows a compositional bias: low complexity; sequence AAPTAAPAAAATP. Over residues 67–85 the composition is skewed to pro residues; that stretch reads APTPVAPPPPPPPPPPPPS. 2 stretches are compositionally biased toward basic and acidic residues: residues 88–102 and 126–140; these read RETR…LREA and EEER…RAEA. Low complexity-rich tracts occupy residues 141-195 and 202-221; these read EAAA…PAAP and PAAP…PAAP. A compositionally biased stretch (basic and acidic residues) spans 223-246; sequence KRPELAAKKPAHPQRDRKTEDRRG. The tr-type G domain maps to 374–544; it reads ARPPVVTIMG…LLQAELLELK (171 aa). Residues 383-390 form a G1 region; sequence GHVDHGKT. 383 to 390 provides a ligand contact to GTP; sequence GHVDHGKT. A G2 region spans residues 408-412; it reads GITQH. A G3 region spans residues 430–433; the sequence is DTPG. GTP is bound by residues 430 to 434 and 484 to 487; these read DTPGH and TKAD. Positions 484–487 are G4; it reads TKAD. The G5 stretch occupies residues 520–522; that stretch reads SAK.

Belongs to the TRAFAC class translation factor GTPase superfamily. Classic translation factor GTPase family. IF-2 subfamily.

It is found in the cytoplasm. In terms of biological role, one of the essential components for the initiation of protein synthesis. Protects formylmethionyl-tRNA from spontaneous hydrolysis and promotes its binding to the 30S ribosomal subunits. Also involved in the hydrolysis of GTP during the formation of the 70S ribosomal complex. This chain is Translation initiation factor IF-2, found in Novosphingobium aromaticivorans (strain ATCC 700278 / DSM 12444 / CCUG 56034 / CIP 105152 / NBRC 16084 / F199).